The sequence spans 701 residues: DNA ligase (701 aa).

Residues 1 to 21 (MSAKSTPDAGPQEQATEAEAE) form a disordered region. Residues 50–54 (DADFD), 100–101 (SL), and glutamate 130 contribute to the NAD(+) site. The N6-AMP-lysine intermediate role is filled by lysine 132. 4 residues coordinate NAD(+): arginine 153, glutamate 193, lysine 309, and lysine 333. Cysteine 427, cysteine 430, cysteine 446, and cysteine 452 together coordinate Zn(2+). Positions 616–701 (SIARTLEGLS…LENGPQAPEG (86 aa)) constitute a BRCT domain.

Belongs to the NAD-dependent DNA ligase family. LigA subfamily. The cofactor is Mg(2+). It depends on Mn(2+) as a cofactor.

It carries out the reaction NAD(+) + (deoxyribonucleotide)n-3'-hydroxyl + 5'-phospho-(deoxyribonucleotide)m = (deoxyribonucleotide)n+m + AMP + beta-nicotinamide D-nucleotide.. Its function is as follows. DNA ligase that catalyzes the formation of phosphodiester linkages between 5'-phosphoryl and 3'-hydroxyl groups in double-stranded DNA using NAD as a coenzyme and as the energy source for the reaction. It is essential for DNA replication and repair of damaged DNA. This chain is DNA ligase, found in Mycobacterium sp. (strain KMS).